We begin with the raw amino-acid sequence, 611 residues long: Threonine--tRNA ligase (611 aa).

The interval 1-145 (MRLLLIHSDH…TILPGEGAAA (145 aa)) is editing domain. The catalytic stretch occupies residues 195–487 (VHVDLMRAKE…TAAQEVPSFP (293 aa)). Zn(2+) is bound by residues C287, H339, and H460.

This sequence belongs to the class-II aminoacyl-tRNA synthetase family. As to quaternary structure, homodimer. Requires Zn(2+) as cofactor.

It is found in the cytoplasm. It carries out the reaction tRNA(Thr) + L-threonine + ATP = L-threonyl-tRNA(Thr) + AMP + diphosphate + H(+). In terms of biological role, catalyzes the attachment of threonine to tRNA(Thr) in a two-step reaction: L-threonine is first activated by ATP to form Thr-AMP and then transferred to the acceptor end of tRNA(Thr). Also edits incorrectly charged L-seryl-tRNA(Thr). In Methanoculleus marisnigri (strain ATCC 35101 / DSM 1498 / JR1), this protein is Threonine--tRNA ligase.